We begin with the raw amino-acid sequence, 55 residues long: Large ribosomal subunit protein bL33 (55 aa).

It belongs to the bacterial ribosomal protein bL33 family.

This Bradyrhizobium sp. (strain BTAi1 / ATCC BAA-1182) protein is Large ribosomal subunit protein bL33.